Consider the following 513-residue polypeptide: t-SNARE domain-containing protein 1 (513 aa).

2 disordered regions span residues 1 to 23 and 49 to 128; these read MSYG…GPSR and ESKL…KPNF. Positions 7–19 are enriched in gly residues; that stretch reads ARGGGLGSRGPFG. Ser-378 carries the post-translational modification Phosphoserine. A t-SNARE coiled-coil homology domain is found at 416-478; that stretch reads LEAIRLREEA…EAARQLLAGA (63 aa). Residues 491-511 form a helical membrane-spanning segment; sequence CFLSAGVTALLVIIIIIATSV.

The protein resides in the membrane. This is t-SNARE domain-containing protein 1 (TSNARE1) from Homo sapiens (Human).